Here is an 869-residue protein sequence, read N- to C-terminus: DNA mismatch repair protein MutS (869 aa).

Position 618–625 (618–625 (GPNMGGKS)) interacts with ATP.

Belongs to the DNA mismatch repair MutS family.

Functionally, this protein is involved in the repair of mismatches in DNA. It is possible that it carries out the mismatch recognition step. This protein has a weak ATPase activity. The protein is DNA mismatch repair protein MutS of Zymomonas mobilis subsp. mobilis (strain ATCC 31821 / ZM4 / CP4).